The chain runs to 163 residues: uncharacterized protein (163 aa).

As to expression, expressed in keratinocytes.

This is an uncharacterized protein from Homo sapiens (Human).